Consider the following 359-residue polypeptide: Chorismate synthase (359 aa).

Positions 48 and 54 each coordinate NADP(+). Residues 125–127, 243–244, glycine 283, 298–302, and arginine 324 each bind FMN; these read RSS, NA, and KPTSS.

This sequence belongs to the chorismate synthase family. Homotetramer. Requires FMNH2 as cofactor.

It catalyses the reaction 5-O-(1-carboxyvinyl)-3-phosphoshikimate = chorismate + phosphate. It functions in the pathway metabolic intermediate biosynthesis; chorismate biosynthesis; chorismate from D-erythrose 4-phosphate and phosphoenolpyruvate: step 7/7. Catalyzes the anti-1,4-elimination of the C-3 phosphate and the C-6 proR hydrogen from 5-enolpyruvylshikimate-3-phosphate (EPSP) to yield chorismate, which is the branch point compound that serves as the starting substrate for the three terminal pathways of aromatic amino acid biosynthesis. This reaction introduces a second double bond into the aromatic ring system. This chain is Chorismate synthase, found in Mannheimia succiniciproducens (strain KCTC 0769BP / MBEL55E).